A 369-amino-acid polypeptide reads, in one-letter code: Tyrosyl-DNA phosphodiesterase 2 (369 aa).

Residues 58 to 77 are disordered; it reads EKTEVTGNKRKDDTAEASGT. The segment covering 59–71 has biased composition (basic and acidic residues); it reads KTEVTGNKRKDDT. The interval 129 to 133 is interaction with 5' end of substrate DNA; the sequence is NVDGL. The Mg(2+) site is built by Asp131 and Glu161. Residues 235 to 240 form an interaction with 5' end of substrate DNA region; that stretch reads HLESCK. The active-site Proton donor/acceptor is Asp271. Residues 273–275 are interaction with 5' end of substrate DNA; sequence NLR.

The protein belongs to the CCR4/nocturin family. TTRAP/TDP2 subfamily. Mg(2+) is required as a cofactor. It depends on Mn(2+) as a cofactor. Expressed ubiquitously during blastula stages and throughout gastrulation. Shortly after shield formation, expressed weakly in dorsal forerunner cells (DFCs). Between somite stages 5 and 9, expressed in the tailbud and around the Kupffer's vesicle at a higher level than the more uniform expression in the embryo.

Its subcellular location is the nucleus. It localises to the PML body. Functionally, DNA repair enzyme that can remove a variety of covalent adducts from DNA through hydrolysis of a 5'-phosphodiester bond, giving rise to DNA with a free 5' phosphate. Catalyzes the hydrolysis of dead-end complexes between DNA and the topoisomerase 2 (top2) active site tyrosine residue. Hydrolyzes 5'-phosphoglycolates on protruding 5' ends on DNA double-strand breaks (DSBs) due to DNA damage by radiation and free radicals. Controls gastrulation movements and left/right (L/R) axis determination via smad3-mediated regulation of cdh1/e-cadherin. Regulates the formation of Kupffer's vesicle, a signaling center essential for establishing L/R asymmetry. Modulates smad3 activity through modulating nodal-acvr1/akt4 signaling. This is Tyrosyl-DNA phosphodiesterase 2 (tdp2) from Danio rerio (Zebrafish).